The following is a 295-amino-acid chain: Ribosomal protein L11 methyltransferase (295 aa).

Residues T145, G166, D188, and N230 each coordinate S-adenosyl-L-methionine.

This sequence belongs to the methyltransferase superfamily. PrmA family.

The protein resides in the cytoplasm. It carries out the reaction L-lysyl-[protein] + 3 S-adenosyl-L-methionine = N(6),N(6),N(6)-trimethyl-L-lysyl-[protein] + 3 S-adenosyl-L-homocysteine + 3 H(+). In terms of biological role, methylates ribosomal protein L11. In Haemophilus influenzae (strain PittEE), this protein is Ribosomal protein L11 methyltransferase.